The chain runs to 452 residues: 3-phosphoshikimate 1-carboxyvinyltransferase (452 aa).

Residues 1–23 (MLNGSASKPATARKSAGLTGSVR) are disordered. The 3-phosphoshikimate site is built by Lys-28, Ser-29, and Arg-33. Residue Lys-28 participates in phosphoenolpyruvate binding. Phosphoenolpyruvate is bound by residues Gly-100 and Arg-128. 4 residues coordinate 3-phosphoshikimate: Ser-173, Gln-175, Asp-326, and Lys-353. Phosphoenolpyruvate is bound at residue Gln-175. Catalysis depends on Asp-326, which acts as the Proton acceptor. Positions 357 and 405 each coordinate phosphoenolpyruvate.

The protein belongs to the EPSP synthase family. Monomer.

The protein localises to the cytoplasm. The catalysed reaction is 3-phosphoshikimate + phosphoenolpyruvate = 5-O-(1-carboxyvinyl)-3-phosphoshikimate + phosphate. Its pathway is metabolic intermediate biosynthesis; chorismate biosynthesis; chorismate from D-erythrose 4-phosphate and phosphoenolpyruvate: step 6/7. Its function is as follows. Catalyzes the transfer of the enolpyruvyl moiety of phosphoenolpyruvate (PEP) to the 5-hydroxyl of shikimate-3-phosphate (S3P) to produce enolpyruvyl shikimate-3-phosphate and inorganic phosphate. The polypeptide is 3-phosphoshikimate 1-carboxyvinyltransferase (Rhizobium johnstonii (strain DSM 114642 / LMG 32736 / 3841) (Rhizobium leguminosarum bv. viciae)).